The primary structure comprises 221 residues: 7-cyano-7-deazaguanine synthase (221 aa).

Residue 9–19 (YSGGMDSFTLL) coordinates ATP. Cysteine 185, cysteine 193, cysteine 196, and cysteine 199 together coordinate Zn(2+).

It belongs to the QueC family. The cofactor is Zn(2+).

It catalyses the reaction 7-carboxy-7-deazaguanine + NH4(+) + ATP = 7-cyano-7-deazaguanine + ADP + phosphate + H2O + H(+). Its pathway is purine metabolism; 7-cyano-7-deazaguanine biosynthesis. Catalyzes the ATP-dependent conversion of 7-carboxy-7-deazaguanine (CDG) to 7-cyano-7-deazaguanine (preQ(0)). The chain is 7-cyano-7-deazaguanine synthase from Marinobacter nauticus (strain ATCC 700491 / DSM 11845 / VT8) (Marinobacter aquaeolei).